Reading from the N-terminus, the 311-residue chain is 4-hydroxy-tetrahydrodipicolinate synthase (311 aa).

Position 51 (T51) interacts with pyruvate. Y140 serves as the catalytic Proton donor/acceptor. K168 serves as the catalytic Schiff-base intermediate with substrate. I209 contributes to the pyruvate binding site.

It belongs to the DapA family. Homotetramer; dimer of dimers.

It localises to the cytoplasm. It catalyses the reaction L-aspartate 4-semialdehyde + pyruvate = (2S,4S)-4-hydroxy-2,3,4,5-tetrahydrodipicolinate + H2O + H(+). Its pathway is amino-acid biosynthesis; L-lysine biosynthesis via DAP pathway; (S)-tetrahydrodipicolinate from L-aspartate: step 3/4. In terms of biological role, catalyzes the condensation of (S)-aspartate-beta-semialdehyde [(S)-ASA] and pyruvate to 4-hydroxy-tetrahydrodipicolinate (HTPA). The chain is 4-hydroxy-tetrahydrodipicolinate synthase from Streptococcus pneumoniae (strain CGSP14).